We begin with the raw amino-acid sequence, 91 residues long: uncharacterized protein (91 aa).

It localises to the plastid. It is found in the cyanelle. This is an uncharacterized protein from Cyanophora paradoxa.